Reading from the N-terminus, the 573-residue chain is Glutamate--tRNA ligase (573 aa).

The 'HIGH' region motif lies at 106 to 116; it reads PNPDGAFHLGN.

It belongs to the class-I aminoacyl-tRNA synthetase family. Glutamate--tRNA ligase type 2 subfamily.

The protein localises to the cytoplasm. The catalysed reaction is tRNA(Glu) + L-glutamate + ATP = L-glutamyl-tRNA(Glu) + AMP + diphosphate. Catalyzes the attachment of glutamate to tRNA(Glu) in a two-step reaction: glutamate is first activated by ATP to form Glu-AMP and then transferred to the acceptor end of tRNA(Glu). The protein is Glutamate--tRNA ligase of Thermococcus onnurineus (strain NA1).